The sequence spans 151 residues: Transcription antitermination protein NusB (151 aa).

This sequence belongs to the NusB family.

Functionally, involved in transcription antitermination. Required for transcription of ribosomal RNA (rRNA) genes. Binds specifically to the boxA antiterminator sequence of the ribosomal RNA (rrn) operons. The sequence is that of Transcription antitermination protein NusB from Thermus thermophilus (strain ATCC BAA-163 / DSM 7039 / HB27).